Reading from the N-terminus, the 480-residue chain is Methylenetetrahydrofolate--tRNA-(uracil-5-)-methyltransferase TrmFO (480 aa).

15-20 lines the FAD pocket; sequence GGGLAG.

Belongs to the MnmG family. TrmFO subfamily. Requires FAD as cofactor.

The protein localises to the cytoplasm. The catalysed reaction is uridine(54) in tRNA + (6R)-5,10-methylene-5,6,7,8-tetrahydrofolate + NADH + H(+) = 5-methyluridine(54) in tRNA + (6S)-5,6,7,8-tetrahydrofolate + NAD(+). The enzyme catalyses uridine(54) in tRNA + (6R)-5,10-methylene-5,6,7,8-tetrahydrofolate + NADPH + H(+) = 5-methyluridine(54) in tRNA + (6S)-5,6,7,8-tetrahydrofolate + NADP(+). Its function is as follows. Catalyzes the folate-dependent formation of 5-methyl-uridine at position 54 (M-5-U54) in all tRNAs. In Sinorhizobium medicae (strain WSM419) (Ensifer medicae), this protein is Methylenetetrahydrofolate--tRNA-(uracil-5-)-methyltransferase TrmFO.